The primary structure comprises 283 residues: ATP synthase gamma chain (283 aa).

The protein belongs to the ATPase gamma chain family. F-type ATPases have 2 components, CF(1) - the catalytic core - and CF(0) - the membrane proton channel. CF(1) has five subunits: alpha(3), beta(3), gamma(1), delta(1), epsilon(1). CF(0) has three main subunits: a, b and c.

It localises to the cell membrane. Functionally, produces ATP from ADP in the presence of a proton gradient across the membrane. The gamma chain is believed to be important in regulating ATPase activity and the flow of protons through the CF(0) complex. This chain is ATP synthase gamma chain, found in Clostridium perfringens (strain ATCC 13124 / DSM 756 / JCM 1290 / NCIMB 6125 / NCTC 8237 / Type A).